A 238-amino-acid polypeptide reads, in one-letter code: MTSKVGEYEDVPEDESRLTEENVSVPEEEVEDEDEEEDDDDDHIYINEETESGREKVLVSHAPQERIVPPLNFCPVERYLYRSGQPSPVNFPFLLNLKLKTIIWLSNEEPQDTLLEFCDTHRINLQFAAINPDAGEDDNPWDGLTEHSIINVLQTIVTQENYPLLVCCGMGRHRTGTVIGCLRRIMGWNLASVSEEYRRFTGSRGGRILVELLIEAFDTNLVKIDKNKAPSWLLTALE.

Residues 1–43 form a disordered region; sequence MTSKVGEYEDVPEDESRLTEENVSVPEEEVEDEDEEEDDDDDH. Thr-2 bears the N-acetylthreonine mark. The residue at position 24 (Ser-24) is a Phosphoserine. Over residues 26-42 the composition is skewed to acidic residues; that stretch reads PEEEVEDEDEEEDDDDD. Residues 72 to 230 enclose the Tyrosine-protein phosphatase domain; sequence NFCPVERYLY…LVKIDKNKAP (159 aa). Catalysis depends on Cys-168, which acts as the Phosphocysteine intermediate.

The protein belongs to the protein-tyrosine phosphatase family.

The protein resides in the cytoplasm. The catalysed reaction is O-phospho-L-tyrosyl-[protein] + H2O = L-tyrosyl-[protein] + phosphate. Putative tyrosine-protein phosphatase required for protection against superoxide stress. Involved in cell-cycle delay in response to linoleic acid hydroperoxide (LoaOOH). This Saccharomyces cerevisiae (strain YJM789) (Baker's yeast) protein is Putative tyrosine-protein phosphatase OCA1 (OCA1).